The primary structure comprises 516 residues: Importin subunit alpha-B (516 aa).

A compositionally biased stretch (basic and acidic residues) spans 1–29 (MQRSKQETRKSQYKKSIDSDESRRKREEA). Residues 1–54 (MQRSKQETRKSQYKKSIDSDESRRKREEASLSIRKNKREESLLKKRTQAVPGST) form a disordered region. In terms of domain architecture, IBB spans 1–55 (MQRSKQETRKSQYKKSIDSDESRRKREEASLSIRKNKREESLLKKRTQAVPGSTP). ARM repeat units lie at residues 55–96 (PVKV…KLLS), 100–140 (SPPI…NIAS), 143–182 (PEQT…NIAG), 185–227 (HYCR…NFCR), 229–268 (KPQP…YLSD), 271–310 (NERI…NIVT), 313–352 (DNQT…NITA), 355–394 (KNQI…NATS), and 398–437 (PQQI…NILV). The tract at residues 490 to 516 (EQEDEGDLMPEGSSFSFSNQTNSNFNL) is disordered. Positions 502 to 516 (SSFSFSNQTNSNFNL) are enriched in low complexity.

The protein belongs to the importin alpha family. As to quaternary structure, forms a complex with tnpo/importin subunit beta.

It is found in the cytoplasm. The protein resides in the nucleus envelope. Its function is as follows. Functions in nuclear protein import via a substrate-importin alpha-beta transport complex that passes though the nuclear pore complexes (NPC). Binds specifically and directly to substrates containing either a simple or bipartite NLS motif. This chain is Importin subunit alpha-B, found in Dictyostelium discoideum (Social amoeba).